A 661-amino-acid polypeptide reads, in one-letter code: UvrABC system protein C (661 aa).

The GIY-YIG domain maps to 52–130 (HKPGVYRMVD…IKRLHPRFNV (79 aa)). A UVR domain is found at 240–275 (QSIKNDMVQAMHKAAKNFDFEQAAAYRDRLSALSHI).

Belongs to the UvrC family. As to quaternary structure, interacts with UvrB in an incision complex.

It localises to the cytoplasm. Functionally, the UvrABC repair system catalyzes the recognition and processing of DNA lesions. UvrC both incises the 5' and 3' sides of the lesion. The N-terminal half is responsible for the 3' incision and the C-terminal half is responsible for the 5' incision. This chain is UvrABC system protein C, found in Bartonella henselae (strain ATCC 49882 / DSM 28221 / CCUG 30454 / Houston 1) (Rochalimaea henselae).